A 132-amino-acid polypeptide reads, in one-letter code: uncharacterized protein (132 aa).

A Glycyl lysine isopeptide (Lys-Gly) (interchain with G-Cter in SAMP2) cross-link involves residue Lys59.

It belongs to the OsmC/Ohr family.

This is an uncharacterized protein from Haloferax volcanii (strain ATCC 29605 / DSM 3757 / JCM 8879 / NBRC 14742 / NCIMB 2012 / VKM B-1768 / DS2) (Halobacterium volcanii).